An 86-amino-acid polypeptide reads, in one-letter code: Small ribosomal subunit protein bS16 (86 aa).

It belongs to the bacterial ribosomal protein bS16 family.

The sequence is that of Small ribosomal subunit protein bS16 from Hamiltonella defensa subsp. Acyrthosiphon pisum (strain 5AT).